The chain runs to 500 residues: L-arabinose isomerase (500 aa).

Residues E306, E333, H350, and H450 each contribute to the Mn(2+) site.

The protein belongs to the arabinose isomerase family. As to quaternary structure, homohexamer. Mn(2+) serves as cofactor.

It catalyses the reaction beta-L-arabinopyranose = L-ribulose. Its pathway is carbohydrate degradation; L-arabinose degradation via L-ribulose; D-xylulose 5-phosphate from L-arabinose (bacterial route): step 1/3. Its function is as follows. Catalyzes the conversion of L-arabinose to L-ribulose. This is L-arabinose isomerase from Escherichia coli O7:K1 (strain IAI39 / ExPEC).